A 376-amino-acid chain; its full sequence is Chaperone protein DnaJ (376 aa).

Residues 5 to 70 (DFYEVLGVGR…DKKAAYDQFG (66 aa)) form the J domain. Residues 132-210 (GLTKELRIPT…CHGEGRVEKS (79 aa)) form a CR-type zinc finger. 8 residues coordinate Zn(2+): Cys145, Cys148, Cys162, Cys165, Cys184, Cys187, Cys198, and Cys201. CXXCXGXG motif repeat units follow at residues 145–152 (CDACDGSG), 162–169 (CGTCHGQG), 184–191 (CPTCHGRG), and 198–205 (CNKCHGEG).

This sequence belongs to the DnaJ family. As to quaternary structure, homodimer. It depends on Zn(2+) as a cofactor.

The protein localises to the cytoplasm. Participates actively in the response to hyperosmotic and heat shock by preventing the aggregation of stress-denatured proteins and by disaggregating proteins, also in an autonomous, DnaK-independent fashion. Unfolded proteins bind initially to DnaJ; upon interaction with the DnaJ-bound protein, DnaK hydrolyzes its bound ATP, resulting in the formation of a stable complex. GrpE releases ADP from DnaK; ATP binding to DnaK triggers the release of the substrate protein, thus completing the reaction cycle. Several rounds of ATP-dependent interactions between DnaJ, DnaK and GrpE are required for fully efficient folding. Also involved, together with DnaK and GrpE, in the DNA replication of plasmids through activation of initiation proteins. The protein is Chaperone protein DnaJ of Shewanella halifaxensis (strain HAW-EB4).